Consider the following 391-residue polypeptide: L-tryptophan--pyruvate aminotransferase 1 (391 aa).

Pyridoxal 5'-phosphate contacts are provided by residues Tyr-58, 100 to 101 (ST), Asn-168, 191 to 194 (DFAY), 214 to 217 (TFSK), and Arg-225. An N6-(pyridoxal phosphate)lysine modification is found at Lys-217.

This sequence belongs to the alliinase family. Pyridoxal 5'-phosphate serves as cofactor. Expressed at the leaf margin and in the vasculature of emerging young leaves. Expressed in the quiescent center and in the vasculature of root tips. Detected in the shoot apical meristem, stems, sepals, stamen filaments, the shoot and root junction, the stigma and the base of the silique.

It is found in the cytoplasm. It carries out the reaction L-tryptophan + 2-oxoglutarate = indole-3-pyruvate + L-glutamate. The catalysed reaction is L-tryptophan + pyruvate = indole-3-pyruvate + L-alanine. It functions in the pathway plant hormone metabolism; auxin biosynthesis. Its activity is regulated as follows. Inhibited by L-kynurenine. In terms of biological role, L-tryptophan aminotransferase involved in auxin (IAA) biosynthesis. Can convert L-tryptophan and pyruvate to indole-3-pyruvic acid (IPA) and alanine. Catalyzes the first step in IPA branch of the auxin biosynthetic pathway. Required for auxin production to initiate multiple change in growth in response to environmental and developmental cues. It is also active with phenylalanine, tyrosine, leucine, alanine, methionine and glutamine. Both TAA1 and TAR2 are required for maintaining proper auxin levels in roots, while TAA1, TAR1 and TAR2 are required for proper embryo patterning. Involved in the maintenance of the root stem cell niches and required for shade avoidance. The sequence is that of L-tryptophan--pyruvate aminotransferase 1 (TAA1) from Arabidopsis thaliana (Mouse-ear cress).